A 72-amino-acid chain; its full sequence is Translational regulator CsrA (72 aa).

This sequence belongs to the CsrA/RsmA family. Homodimer; the beta-strands of each monomer intercalate to form a hydrophobic core, while the alpha-helices form wings that extend away from the core.

The protein resides in the cytoplasm. Functionally, a translational regulator that binds mRNA to regulate translation initiation and/or mRNA stability. Usually binds in the 5'-UTR at or near the Shine-Dalgarno sequence preventing ribosome-binding, thus repressing translation. Its main target seems to be the major flagellin gene, while its function is anatagonized by FliW. The protein is Translational regulator CsrA of Clostridium botulinum (strain Loch Maree / Type A3).